Reading from the N-terminus, the 432-residue chain is Adenylosuccinate synthetase (432 aa).

Residues 13-19 and 41-43 each bind GTP; these read GDEGKGK and GHT. The Proton acceptor role is filled by aspartate 14. Residues aspartate 14 and glycine 41 each coordinate Mg(2+). IMP contacts are provided by residues 14–17, 39–42, threonine 130, arginine 144, glutamine 225, threonine 240, and arginine 304; these read DEGK and NAGH. Catalysis depends on histidine 42, which acts as the Proton donor. 300–306 is a binding site for substrate; that stretch reads STTGRRR. Residues arginine 306, 332-334, and 415-417 contribute to the GTP site; these read KID and STG.

The protein belongs to the adenylosuccinate synthetase family. Homodimer. The cofactor is Mg(2+).

It localises to the cytoplasm. It catalyses the reaction IMP + L-aspartate + GTP = N(6)-(1,2-dicarboxyethyl)-AMP + GDP + phosphate + 2 H(+). It functions in the pathway purine metabolism; AMP biosynthesis via de novo pathway; AMP from IMP: step 1/2. Functionally, plays an important role in the de novo pathway of purine nucleotide biosynthesis. Catalyzes the first committed step in the biosynthesis of AMP from IMP. The protein is Adenylosuccinate synthetase of Blochmanniella pennsylvanica (strain BPEN).